The primary structure comprises 1202 residues: Metabotropic glycine receptor (1202 aa).

An N-terminal signal peptide occupies residues M1–A24. A disordered region spans residues S25–S62. The Extracellular segment spans residues S25–R417. Over residues P28 to S40 the composition is skewed to basic and acidic residues. A cache-like region region spans residues Y85–W281. N-linked (GlcNAc...) asparagine glycans are attached at residues N98 and N143. C99 and C272 form a disulfide bridge. Positions 172 and 173 each coordinate glycine. A glycan (N-linked (GlcNAc...) asparagine) is linked at N215. Positions L234–R253 are disordered. Position 271 (E271) interacts with glycine. N-linked (GlcNAc...) asparagine glycosylation occurs at N274. Position 307 (D307) interacts with glycine. N333 carries N-linked (GlcNAc...) asparagine glycosylation. The helical transmembrane segment at L418–Y439 threads the bilayer. Residues H440 to G451 are Cytoplasmic-facing. A helical membrane pass occupies residues L452–F474. The Extracellular portion of the chain corresponds to E475–T478. The helical transmembrane segment at F479 to L501 threads the bilayer. An intrachain disulfide couples C481 to C573. Residues K502–R525 are Cytoplasmic-facing. Residues V526–S547 traverse the membrane as a helical segment. Residues M548–D576 lie on the Extracellular side of the membrane. The chain crosses the membrane as a helical span at residues R577 to C597. The Cytoplasmic portion of the chain corresponds to Y598–R611. The chain crosses the membrane as a helical span at residues Y612 to V633. Residues L634 to W642 lie on the Extracellular side of the membrane. The helical transmembrane segment at M643 to I664 threads the bilayer. The Cytoplasmic segment spans residues P665–K1202. A phosphoserine mark is found at S694, S705, and S708. Disordered stretches follow at residues R757 to L899 and L914 to D995. Composition is skewed to basic and acidic residues over residues C769–A781 and S819–T828. K774 is covalently cross-linked (Glycyl lysine isopeptide (Lys-Gly) (interchain with G-Cter in ubiquitin)). Over residues E845–K856 the composition is skewed to low complexity. The residue at position 865 (S865) is a Phosphoserine. Residues M925 to R943 show a composition bias toward basic and acidic residues. Composition is skewed to polar residues over residues K944–N958 and Q975–K994. S946 carries the post-translational modification Phosphoserine. Positions V1002–E1006 match the VCPWE motif 1 motif. S1061 bears the Phosphoserine mark. Positions V1067–E1071 match the VCPWE motif 2 motif. Residue S1076 is modified to Phosphoserine. 2 stretches are compositionally biased toward polar residues: residues Q1132 to V1144 and C1151 to T1162. The segment at Q1132–T1162 is disordered. A VCPWE motif 3 motif is present at residues V1167–E1171.

This sequence belongs to the G-protein coupled receptor 3 family. In terms of assembly, homodimer. Associates with the RGS7-GNB5 complex, promoting its localization to the cell membrane and regulating its GTPase activator activity. Interacts (via VCPWE motifs) with GNAO1. Interacts with GPC4. Interacts with EGFLAM.

The protein localises to the cell membrane. It is found in the postsynaptic cell membrane. It localises to the presynaptic cell membrane. The protein resides in the nucleus. Functionally, metabotropic receptor for glycine that controls synapse formation and function in the brain. Acts as an atypical G-protein coupled receptor that recruits and regulates the RGS7-GNB5 complex instead of activating G proteins. In absence of glycine ligand, promotes the GTPase activator activity of RGS7, increasing the GTPase activity of G protein alpha subunits, thereby driving them into their inactive GDP-bound form. Glycine-binding changes the conformation of the intracellular surface, inhibiting the GTPase activator activity of the RGS7-GNB5 complex, promoting G protein alpha subunits into their active GTP-bound form and regulating cAMP levels. Also able to bind taurine, a compound closely related to glycine, but with a two-fold lower affinity. Glycine receptor-dependent regulation of cAMP controls key ion channels, kinases and neurotrophic factors involved in neuronal excitability and synaptic transmission. Plays a pivotal role in regulating mood and cognition via its ability to regulate neuronal excitability in L2/L3 pyramidal neurons of the prefrontal cortex. Also involved in spatial learning by regulating hippocampal CA1 neuronal excitability. Acts as a synaptic organizer in the hippocampus, required for proper mossy fiber-CA3 neurocircuitry establishment, structure and function: induces presynaptic differentiation in contacting axons via its interaction with GPC4. In addition to glycine, may also act as a receptor for osteocalcin (BGLAP) hormone: osteocalcin-binding initiates a signaling response that prevents neuronal apoptosis in the hippocampus and regulates the synthesis of neurotransmitters. The chain is Metabotropic glycine receptor from Rattus norvegicus (Rat).